A 365-amino-acid polypeptide reads, in one-letter code: MSHNTFGHLFRVTTWGESHGPALGCVVDGCPPGLRFKLEDLQVWLDKRKPGQSRFVTQRREDDLVKVLSGVMLDADGETMTSTGTPISMLIENTDQRSKDYGEIARQYRPGHADYTYDLKYGIRDYRGGGRSSARETAARVAAGGIARLVVPGVTVRGALVQIGKHKIDRRNWDWDQVDQNPFFSPDAAIVPVWEEYLDGIRKAGSSIGAVIEVIAEGVPAGLGAPIYSKLDQDIASLLMSINAVKGVEIGNGFAAAETSGEDNADAMRMGNDGTPIFLSNNAGGILGGISTGQPVVARFAVKPTSSILTERQSIDADGKNVDVRTKGRHDPCVGIRAVPIGEAMVACAIADHYLRDRGQTGRLK.

The NADP(+) site is built by arginine 48 and arginine 54. Residues 131–133 (RSS), 243–244 (NA), glycine 288, 303–307 (KPTSS), and arginine 329 each bind FMN.

It belongs to the chorismate synthase family. Homotetramer. It depends on FMNH2 as a cofactor.

The catalysed reaction is 5-O-(1-carboxyvinyl)-3-phosphoshikimate = chorismate + phosphate. It participates in metabolic intermediate biosynthesis; chorismate biosynthesis; chorismate from D-erythrose 4-phosphate and phosphoenolpyruvate: step 7/7. Its function is as follows. Catalyzes the anti-1,4-elimination of the C-3 phosphate and the C-6 proR hydrogen from 5-enolpyruvylshikimate-3-phosphate (EPSP) to yield chorismate, which is the branch point compound that serves as the starting substrate for the three terminal pathways of aromatic amino acid biosynthesis. This reaction introduces a second double bond into the aromatic ring system. The sequence is that of Chorismate synthase from Rhizobium etli (strain ATCC 51251 / DSM 11541 / JCM 21823 / NBRC 15573 / CFN 42).